We begin with the raw amino-acid sequence, 371 residues long: Probable protein phosphatase 2C 11 (371 aa).

Residues 29 to 49 (FFFFLFNSQTISSFIIFYLFL) form a helical membrane-spanning segment. Residues 67 to 95 (PPLSVAPLRGDANSPPPESSSSPATKSSL) form a disordered region. Low complexity predominate over residues 85 to 94 (SSSSPATKSS). Positions 123–368 (SYGYSSLKGK…DNITCIVVRF (246 aa)) constitute a PPM-type phosphatase domain. Mn(2+)-binding residues include aspartate 159, glycine 160, aspartate 320, and aspartate 359.

This sequence belongs to the PP2C family. The cofactor is Mg(2+). Mn(2+) serves as cofactor.

The protein localises to the membrane. It catalyses the reaction O-phospho-L-seryl-[protein] + H2O = L-seryl-[protein] + phosphate. The enzyme catalyses O-phospho-L-threonyl-[protein] + H2O = L-threonyl-[protein] + phosphate. This is Probable protein phosphatase 2C 11 from Arabidopsis thaliana (Mouse-ear cress).